A 445-amino-acid chain; its full sequence is Exodeoxyribonuclease 7 large subunit (445 aa).

The protein belongs to the XseA family. As to quaternary structure, heterooligomer composed of large and small subunits.

It is found in the cytoplasm. The catalysed reaction is Exonucleolytic cleavage in either 5'- to 3'- or 3'- to 5'-direction to yield nucleoside 5'-phosphates.. In terms of biological role, bidirectionally degrades single-stranded DNA into large acid-insoluble oligonucleotides, which are then degraded further into small acid-soluble oligonucleotides. This chain is Exodeoxyribonuclease 7 large subunit, found in Pasteurella multocida (strain Pm70).